We begin with the raw amino-acid sequence, 477 residues long: Ribulose bisphosphate carboxylase large chain (477 aa).

A propeptide spanning residues 1–2 is cleaved from the precursor; that stretch reads MS. Residue Pro-3 is modified to N-acetylproline. An N6,N6,N6-trimethyllysine modification is found at Lys-14. Residues Asn-123 and Thr-173 each coordinate substrate. The active-site Proton acceptor is the Lys-175. Substrate is bound at residue Lys-177. Lys-201, Asp-203, and Glu-204 together coordinate Mg(2+). Residue Lys-201 is modified to N6-carboxylysine. Residue His-294 is the Proton acceptor of the active site. Positions 295, 327, and 379 each coordinate substrate.

The protein belongs to the RuBisCO large chain family. Type I subfamily. In terms of assembly, heterohexadecamer of 8 large chains and 8 small chains; disulfide-linked. The disulfide link is formed within the large subunit homodimers. The cofactor is Mg(2+). In terms of processing, the disulfide bond which can form in the large chain dimeric partners within the hexadecamer appears to be associated with oxidative stress and protein turnover.

It is found in the plastid. It localises to the chloroplast. It carries out the reaction 2 (2R)-3-phosphoglycerate + 2 H(+) = D-ribulose 1,5-bisphosphate + CO2 + H2O. The catalysed reaction is D-ribulose 1,5-bisphosphate + O2 = 2-phosphoglycolate + (2R)-3-phosphoglycerate + 2 H(+). RuBisCO catalyzes two reactions: the carboxylation of D-ribulose 1,5-bisphosphate, the primary event in carbon dioxide fixation, as well as the oxidative fragmentation of the pentose substrate in the photorespiration process. Both reactions occur simultaneously and in competition at the same active site. The sequence is that of Ribulose bisphosphate carboxylase large chain from Nicotiana acuminata (Acuminate tobacco).